A 758-amino-acid polypeptide reads, in one-letter code: Protein hunchback (758 aa).

Disordered stretches follow at residues 30–51 (EPGHHLDGNSVASSPRQSPIPS) and 172–214 (EKLQ…EDMK). Positions 39–51 (SVASSPRQSPIPS) are enriched in polar residues. Phosphothreonine is present on T178. Residues S188, S207, S209, and S210 each carry the phosphoserine modification. A compositionally biased stretch (basic and acidic residues) spans 198-214 (EPEKEHDQMSNSSEDMK). C2H2-type zinc fingers lie at residues 240–262 (YKCKTCGVVAITKVDFWAHTRTH), 269–291 (LQCPKCPFVTEFKHHLEYHIRKH), 297–319 (FQCDKCSYTCVNKSMLNSHRKSH), and 325–349 (YRCADCDYATKYCHSFKLHLRKYGH). Disordered stretches follow at residues 365 to 416 (LVID…PVAT) and 513 to 536 (QLQQQNQQQSDNEEEEQDDEYERK). Composition is skewed to low complexity over residues 398–415 (VAAVAPQQQQSQPAQPVA) and 513–522 (QLQQQNQQQS). Positions 523–532 (DNEEEEQDDE) are enriched in acidic residues. Phosphoserine is present on residues S537 and S540. The tract at residues 603 to 695 (MTSPEQLKVP…TTSAVAAPPS (93 aa)) is disordered. Low complexity predominate over residues 652-695 (ANTSASSTASSSGNSSNASSNSNGNSSSNSSSNGTTSAVAAPPS). 2 consecutive C2H2-type zinc fingers follow at residues 705 to 727 (YECKYCDIFFKDAVLYTIHMGYH) and 733 to 757 (FKCNMCGEKCDGPVGLFVHMARNAH).

It belongs to the hunchback C2H2-type zinc-finger protein family. In embryo, expression of maternal transcript is highest in anterior region. Zygotic transcript is expressed in anterior region until the beginning of gastrulation and in posterior region until early gastrulation. After this, it is expressed in developing nervous system.

It localises to the nucleus. In terms of biological role, gap class segmentation protein that controls development of head structures. The chain is Protein hunchback from Drosophila melanogaster (Fruit fly).